A 424-amino-acid polypeptide reads, in one-letter code: Protein arginine N-methyltransferase 2 (424 aa).

Disordered regions lie at residues 67-89 and 151-212; these read DEAQ…EQKS and YEPL…SSRY. Positions 71 to 89 are enriched in polar residues; it reads TETNGVNGETSSASTEQKS. 2 stretches are compositionally biased toward low complexity: residues 163–173 and 187–201; these read TGQGEDAANEP and ETTA…ASTE. The RMT2 domain maps to 205-424; that stretch reads PDVTSSRYLD…YRLPLCKFMD (220 aa). S-adenosyl-L-methionine-binding positions include tyrosine 212, methionine 241, 261 to 266, 282 to 284, 309 to 310, and aspartate 329; these read HGMGIV, EAH, and WQ.

This sequence belongs to the class I-like SAM-binding methyltransferase superfamily. RMT2 methyltransferase family. Monomer.

The protein localises to the cytoplasm. It is found in the nucleus. S-adenosyl-L-methionine-dependent protein-arginine N-methyltransferase that methylates the delta-nitrogen atom of arginine residues to form N5-methylarginine (type IV) in target proteins. Monomethylates ribosomal protein L12. The chain is Protein arginine N-methyltransferase 2 from Aspergillus fumigatus (strain ATCC MYA-4609 / CBS 101355 / FGSC A1100 / Af293) (Neosartorya fumigata).